A 509-amino-acid chain; its full sequence is Glycerol kinase (509 aa).

Thr17 contacts ADP. ATP-binding residues include Thr17, Thr18, and Ser19. A sn-glycerol 3-phosphate-binding site is contributed by Thr17. Arg21 is an ADP binding site. Sn-glycerol 3-phosphate-binding residues include Arg87, Glu88, Tyr139, and Asp256. Arg87, Glu88, Tyr139, Asp256, and Gln257 together coordinate glycerol. ADP is bound by residues Thr278 and Gly322. The ATP site is built by Thr278, Gly322, Gln326, and Ala423. Ala423 and Asn427 together coordinate ADP.

The protein belongs to the FGGY kinase family.

It catalyses the reaction glycerol + ATP = sn-glycerol 3-phosphate + ADP + H(+). It functions in the pathway polyol metabolism; glycerol degradation via glycerol kinase pathway; sn-glycerol 3-phosphate from glycerol: step 1/1. Inhibited by fructose 1,6-bisphosphate (FBP). In terms of biological role, key enzyme in the regulation of glycerol uptake and metabolism. Catalyzes the phosphorylation of glycerol to yield sn-glycerol 3-phosphate. The sequence is that of Glycerol kinase from Corynebacterium glutamicum (strain R).